The following is a 928-amino-acid chain: Outer membrane protein SlpA (928 aa).

An N-terminal signal peptide occupies residues 1-23 (MKKRLVTLLAGLLTVLSMGFGLA). Positions 24 to 84 (QFSDVPAGHW…QQIEEELKTQ (61 aa)) constitute an SLH domain.

As to quaternary structure, homotrimer.

Its subcellular location is the cell outer membrane. In terms of biological role, plays an important role in the structural organization and integrity of the cell envelope, bridging the outer membrane to the peptidoglyan layer. Appears to be a nonselective channel. The polypeptide is Outer membrane protein SlpA (slpA) (Thermus thermophilus (strain ATCC 27634 / DSM 579 / HB8)).